Reading from the N-terminus, the 1157-residue chain is DNA-directed RNA polymerase subunit beta (1157 aa).

Belongs to the RNA polymerase beta chain family. In terms of assembly, the RNAP catalytic core consists of 2 alpha, 1 beta, 1 beta' and 1 omega subunit. When a sigma factor is associated with the core the holoenzyme is formed, which can initiate transcription.

It carries out the reaction RNA(n) + a ribonucleoside 5'-triphosphate = RNA(n+1) + diphosphate. Its function is as follows. DNA-dependent RNA polymerase catalyzes the transcription of DNA into RNA using the four ribonucleoside triphosphates as substrates. The polypeptide is DNA-directed RNA polymerase subunit beta (Tropheryma whipplei (strain Twist) (Whipple's bacillus)).